The sequence spans 239 residues: MRIDVVTIFPAYLDPLRQSLPGKAIQSGLVDLRVHDLRRWTHDAHRSVDDAPYGGGPGMVMKAPVWGEALDEIASAETLLVVPTPAGVLFDQATAARWSAERHLVFACGRYEGIDQRVVEDAARRMRVEEVSIGDYVLPGGESAAVVMIEAVLRLLDGVLGNPASRHDDSHSPALDRRLEGPSYTRPPSWRGLDVPEVLLSGDHARIAAWRREVSLQRTRERRPELLADPVGPQDDPGR.

Residues G109 and 133 to 138 (IGDYVL) contribute to the S-adenosyl-L-methionine site. Disordered regions lie at residues 163-187 (PASR…YTRP) and 217-239 (QRTR…DPGR). Basic and acidic residues-rich tracts occupy residues 165-180 (SRHD…RRLE) and 217-226 (QRTRERRPEL).

Belongs to the RNA methyltransferase TrmD family. As to quaternary structure, homodimer.

Its subcellular location is the cytoplasm. It catalyses the reaction guanosine(37) in tRNA + S-adenosyl-L-methionine = N(1)-methylguanosine(37) in tRNA + S-adenosyl-L-homocysteine + H(+). Its function is as follows. Specifically methylates guanosine-37 in various tRNAs. The protein is tRNA (guanine-N(1)-)-methyltransferase of Mycolicibacterium paratuberculosis (strain ATCC BAA-968 / K-10) (Mycobacterium paratuberculosis).